We begin with the raw amino-acid sequence, 426 residues long: Serine hydroxymethyltransferase (426 aa).

(6S)-5,6,7,8-tetrahydrofolate-binding positions include Leu113 and 117 to 119 (GHL). Lys222 is modified (N6-(pyridoxal phosphate)lysine). 363–365 (SAF) provides a ligand contact to (6S)-5,6,7,8-tetrahydrofolate.

It belongs to the SHMT family. In terms of assembly, homodimer. The cofactor is pyridoxal 5'-phosphate.

The protein resides in the cytoplasm. The enzyme catalyses (6R)-5,10-methylene-5,6,7,8-tetrahydrofolate + glycine + H2O = (6S)-5,6,7,8-tetrahydrofolate + L-serine. It participates in one-carbon metabolism; tetrahydrofolate interconversion. Its pathway is amino-acid biosynthesis; glycine biosynthesis; glycine from L-serine: step 1/1. Catalyzes the reversible interconversion of serine and glycine with tetrahydrofolate (THF) serving as the one-carbon carrier. This reaction serves as the major source of one-carbon groups required for the biosynthesis of purines, thymidylate, methionine, and other important biomolecules. Also exhibits THF-independent aldolase activity toward beta-hydroxyamino acids, producing glycine and aldehydes, via a retro-aldol mechanism. This is Serine hydroxymethyltransferase from Bacteroides thetaiotaomicron (strain ATCC 29148 / DSM 2079 / JCM 5827 / CCUG 10774 / NCTC 10582 / VPI-5482 / E50).